The following is a 98-amino-acid chain: Defensin-B (98 aa).

The N-terminal stretch at 1–20 is a signal peptide; the sequence is MKSITVICFLALCTVAITSA. Residues 21–58 constitute a propeptide that is removed on maturation; that stretch reads YPQEPVLADEARPFANSLFDELPEETYQAAVENFRLKR. 3 disulfide bridges follow: Cys61–Cys88, Cys74–Cys94, and Cys78–Cys96.

It belongs to the invertebrate defensin family. Type 1 subfamily.

Its subcellular location is the secreted. In terms of biological role, antibacterial peptide mostly active against Gram-positive bacteria. The protein is Defensin-B (DEFB) of Aedes aegypti (Yellowfever mosquito).